Consider the following 864-residue polypeptide: Microtubule-associated protein TORTIFOLIA1 (864 aa).

The segment at 1 to 26 (MSTPTTSGSAAKPTRPARSSSLATRS) is disordered. A compositionally biased stretch (polar residues) spans 17–26 (ARSSSLATRS). HEAT repeat units lie at residues 76–113 (ETLP…LHCD), 117–154 (AHLT…IYLK), 167–204 (LAVG…SAAS), 208–245 (TSFQ…VGAI), and 248–285 (QSLE…HSSG). The segment at 329–353 (DGASDDSKLSASEQLGSEKNGEKRS) is disordered. Serine 414 carries the post-translational modification Phosphoserine. Residues 426 to 504 (NDEEESGLDD…QSEGSFTSNR (79 aa)) form a disordered region. Over residues 439 to 448 (MGSSNRLKNT) the composition is skewed to polar residues. Over residues 449–459 (QADDKQVKGRF) the composition is skewed to basic and acidic residues. The segment covering 489-504 (VSNTDNQSEGSFTSNR) has biased composition (polar residues). Residues 508–561 (SAIQRQLLQLERQQTNLMNMLQEFIGGSHDSMVTLEGRVRGLERIVEDMARDLS) adopt a coiled-coil conformation. The segment at 615-670 (DDWFIPPHAASRNGQAGPRRSPRSEQYENEHMGNGRRGWDNKASGTIRFGEGPSAR) is disordered. The segment covering 636–654 (PRSEQYENEHMGNGRRGWD) has biased composition (basic and acidic residues).

In terms of assembly, interacts with WAV3. Expressed in roots, hypocotyls, stems, flowers, siliques, inflorescences, petioles, cotyledons, and leaves. Particularly present in root tips and shoot meristems.

The protein resides in the cytoplasm. Its subcellular location is the cytoskeleton. Its function is as follows. Plant-specific microtubule-associated protein (MAP) that regulates the orientation of cortical microtubules and the direction of organ growth. Determines microtubule organization by modulating microtubule severing. This chain is Microtubule-associated protein TORTIFOLIA1, found in Arabidopsis thaliana (Mouse-ear cress).